A 142-amino-acid chain; its full sequence is Large ribosomal subunit protein uL13 (142 aa).

It belongs to the universal ribosomal protein uL13 family. In terms of assembly, part of the 50S ribosomal subunit.

Functionally, this protein is one of the early assembly proteins of the 50S ribosomal subunit, although it is not seen to bind rRNA by itself. It is important during the early stages of 50S assembly. This chain is Large ribosomal subunit protein uL13, found in Acidovorax sp. (strain JS42).